We begin with the raw amino-acid sequence, 775 residues long: Ankyrin repeat and EF-hand domain-containing protein 1 (775 aa).

ANK repeat units lie at residues 47-76 (DGLS…HPDV), 184-213 (TGRT…EVNA), 217-246 (DRHH…DMGL), 250-279 (DGNT…DLKW), 524-553 (TYKT…NVNA), 557-586 (FLWT…SIDA), 590-619 (NNST…KFQI), and 623-652 (KGHA…NLPK).

The polypeptide is Ankyrin repeat and EF-hand domain-containing protein 1 (Ankef1) (Mus musculus (Mouse)).